Here is a 146-residue protein sequence, read N- to C-terminus: 3-dehydroquinate dehydratase (146 aa).

Tyr-22 serves as the catalytic Proton acceptor. 3 residues coordinate substrate: Asn-73, His-79, and Asp-86. His-99 serves as the catalytic Proton donor. Residues 100-101 (LS) and Arg-110 contribute to the substrate site.

It belongs to the type-II 3-dehydroquinase family. As to quaternary structure, homododecamer.

It catalyses the reaction 3-dehydroquinate = 3-dehydroshikimate + H2O. Its pathway is metabolic intermediate biosynthesis; chorismate biosynthesis; chorismate from D-erythrose 4-phosphate and phosphoenolpyruvate: step 3/7. In terms of biological role, catalyzes a trans-dehydration via an enolate intermediate. This chain is 3-dehydroquinate dehydratase, found in Parasynechococcus marenigrum (strain WH8102).